Here is a 121-residue protein sequence, read N- to C-terminus: Large ribosomal subunit protein bL20 (121 aa).

It belongs to the bacterial ribosomal protein bL20 family.

Binds directly to 23S ribosomal RNA and is necessary for the in vitro assembly process of the 50S ribosomal subunit. It is not involved in the protein synthesizing functions of that subunit. This chain is Large ribosomal subunit protein bL20, found in Orientia tsutsugamushi (strain Ikeda) (Rickettsia tsutsugamushi).